The primary structure comprises 336 residues: D-alanine--D-alanine ligase (336 aa).

The 207-residue stretch at K124–N330 folds into the ATP-grasp domain. A154–E209 is a binding site for ATP. 3 residues coordinate Mg(2+): D284, E297, and N299.

This sequence belongs to the D-alanine--D-alanine ligase family. Mg(2+) is required as a cofactor. Mn(2+) serves as cofactor.

The protein resides in the cytoplasm. It carries out the reaction 2 D-alanine + ATP = D-alanyl-D-alanine + ADP + phosphate + H(+). It functions in the pathway cell wall biogenesis; peptidoglycan biosynthesis. Functionally, cell wall formation. In Shewanella sp. (strain ANA-3), this protein is D-alanine--D-alanine ligase.